Reading from the N-terminus, the 212-residue chain is Pyridoxine/pyridoxamine 5'-phosphate oxidase (212 aa).

Substrate-binding positions include 8-11 and K66; that span reads RREY. Residues 61–66, 76–77, R82, K83, and Q105 each bind FMN; these read RIVLLK and FT. Substrate is bound by residues Y123, R127, and S131. FMN-binding positions include 140 to 141 and W185; that span reads QS. 191–193 provides a ligand contact to substrate; it reads RLH. FMN is bound at residue R195.

The protein belongs to the pyridoxamine 5'-phosphate oxidase family. Homodimer. It depends on FMN as a cofactor.

The catalysed reaction is pyridoxamine 5'-phosphate + O2 + H2O = pyridoxal 5'-phosphate + H2O2 + NH4(+). It catalyses the reaction pyridoxine 5'-phosphate + O2 = pyridoxal 5'-phosphate + H2O2. Its pathway is cofactor metabolism; pyridoxal 5'-phosphate salvage; pyridoxal 5'-phosphate from pyridoxamine 5'-phosphate: step 1/1. It functions in the pathway cofactor metabolism; pyridoxal 5'-phosphate salvage; pyridoxal 5'-phosphate from pyridoxine 5'-phosphate: step 1/1. In terms of biological role, catalyzes the oxidation of either pyridoxine 5'-phosphate (PNP) or pyridoxamine 5'-phosphate (PMP) into pyridoxal 5'-phosphate (PLP). This Shewanella frigidimarina (strain NCIMB 400) protein is Pyridoxine/pyridoxamine 5'-phosphate oxidase.